Consider the following 232-residue polypeptide: Nuclear transcription factor Y subunit nfyc-1 (232 aa).

The segment at 191–232 (TVPTTSTNGPGHMSEDSFQDPNMHSDFHQRTSNSSVNRSHHN) is disordered. A compositionally biased stretch (polar residues) spans 220 to 232 (RTSNSSVNRSHHN).

Belongs to the NFYC/HAP5 subunit family. As to quaternary structure, forms two NF-Y heterotrimeric transcription factor complexes: the nfya-1-NF-Y complex is composed of nfya-1, nfyb-1 and nfyc-1, and the nfya-2-NF-Y complex is composed of nfya-2, nfyb-1 and nfyc-1. Interacts with nfyb-1; the interaction is direct and is required for the interaction with either nfya-1 or nfya-2, and subsequent binding of the complex to the 5'-CCAAT-3' box motif in DNA. In terms of tissue distribution, expressed in certain parts of the gonads with high expression in fertilized oocytes in the uterus and mature oocytes from the distal to the proximal arm of the gonad, but weak expression in the syncytial ovaries and immature oocytes at the beginning of the proximal arm of the gonad. Expressed in the excretory cell, secretory cells in the pharyngeal terminal bulb wall, in the small ganglia surrounding the pharynx and in the neurons running anteriorly to the sensory organs in the head. Not expressed in the intestine, the hypodermis or body wall muscle surrounding the pseudocoelomic space.

The protein resides in the nucleus. It localises to the cytoplasm. Its subcellular location is the perikaryon. Its function is as follows. Component of sequence-specific heterotrimeric transcription factor (nfya-1-NF-Y and nfya-2-NF-Y) complexes which specifically recognize a 5'-CCAAT-3' box motif found in the promoters of its target genes to regulate their expression and control cellular identity in particular tissue types. In association with the components in the NF-Y complexes, represses the expression of the T-box transcription factor tbx-2 throughout larval development, which most likely restricts its expression to certain tissues. May act to repress txb-2 expression in conjunction with tbx-2 itself, which has an autoregulatory role. In association with the components in the nfya-1-NF-Y complex, negatively regulates the expression of the homeobox protein egl-5 to spatially restrict its expression in tissues such as the head. May regulate egl-5 expression in association with the mes-2-mes-3-mes-6 complex. The chain is Nuclear transcription factor Y subunit nfyc-1 from Caenorhabditis elegans.